Consider the following 342-residue polypeptide: MNTADFDFHLPEELIAQTPLEKRDASKLLIVNRETGEMQDKHFHSIIDMLEPGDALVMNDTRVLPARLYGQKVETGGHVELLLLKNTSGDXWEVLAKPAKRLKVGTRISFGDGRLSAVVTEELTHGGRIVRFEYQGIFLEVLESLGEMPLPPYIHEKLDDRERYQTVYAKESGSAAAPTAGLHFTKELLAEIQAKGVHLVYLTLHVGLGTFRPVSVDNLDEHEMHSEFYQLSEEAAATLRSVKENGGRVIAVGTTSIRTLETIGSKFDGQIQADSGWTNIFIKPGYEWKVVDAFSTNFHLPKSTLVMLVSAFAGRELVLDAYHHAIQEHYRFFSFGDAMFIY.

It belongs to the QueA family. In terms of assembly, monomer.

The protein localises to the cytoplasm. The catalysed reaction is 7-aminomethyl-7-carbaguanosine(34) in tRNA + S-adenosyl-L-methionine = epoxyqueuosine(34) in tRNA + adenine + L-methionine + 2 H(+). The protein operates within tRNA modification; tRNA-queuosine biosynthesis. In terms of biological role, transfers and isomerizes the ribose moiety from AdoMet to the 7-aminomethyl group of 7-deazaguanine (preQ1-tRNA) to give epoxyqueuosine (oQ-tRNA). The polypeptide is S-adenosylmethionine:tRNA ribosyltransferase-isomerase (Streptococcus pneumoniae serotype 19F (strain G54)).